Here is a 332-residue protein sequence, read N- to C-terminus: Methionine synthase (332 aa).

His211, Cys213, and Cys296 together coordinate Zn(2+).

It belongs to the archaeal MetE family. The cofactor is Zn(2+).

It participates in amino-acid biosynthesis; L-methionine biosynthesis via de novo pathway. Its function is as follows. Catalyzes the transfer of a methyl group to L-homocysteine resulting in methionine formation. The physiological methyl donor is unknown. In Saccharolobus solfataricus (strain ATCC 35092 / DSM 1617 / JCM 11322 / P2) (Sulfolobus solfataricus), this protein is Methionine synthase.